Here is a 431-residue protein sequence, read N- to C-terminus: uncharacterized protein (431 aa).

The next 11 membrane-spanning stretches (helical) occupy residues 33-53 (VARV…VIYL), 63-83 (FSVF…ANGL), 111-131 (VSGM…PLWS), 143-163 (VALL…LGML), 197-217 (LVGF…MLMT), 241-261 (AHSI…PVLL), 273-293 (GVVI…LTAM), 318-338 (LIGG…PWIM), 358-378 (AAAV…AAAL), 383-403 (SLGW…PLSL), and 407-427 (TVVA…VALA).

To M.tuberculosis Rv1510 and Rv3630.

It localises to the cell membrane. This is an uncharacterized protein from Mycobacterium bovis (strain ATCC BAA-935 / AF2122/97).